A 268-amino-acid polypeptide reads, in one-letter code: GTP cyclohydrolase FolE2 (268 aa).

The protein belongs to the GTP cyclohydrolase IV family.

The enzyme catalyses GTP + H2O = 7,8-dihydroneopterin 3'-triphosphate + formate + H(+). Its pathway is cofactor biosynthesis; 7,8-dihydroneopterin triphosphate biosynthesis; 7,8-dihydroneopterin triphosphate from GTP: step 1/1. Its function is as follows. Converts GTP to 7,8-dihydroneopterin triphosphate. In Paraburkholderia phymatum (strain DSM 17167 / CIP 108236 / LMG 21445 / STM815) (Burkholderia phymatum), this protein is GTP cyclohydrolase FolE2.